Here is a 166-residue protein sequence, read N- to C-terminus: Ubiquitin-conjugating enzyme E2-18 kDa (166 aa).

The 161-residue stretch at Met5–Gly165 folds into the UBC core domain. Cys90 (glycyl thioester intermediate) is an active-site residue. A Glycyl cysteine thioester (Cys-Gly) (interchain with G-Cter in ubiquitin) cross-link involves residue Cys90.

This sequence belongs to the ubiquitin-conjugating enzyme family. In terms of processing, autoubiquitinated at Cys-90; undergoes 'Lys-48'-linked polyubiquitination, which leads to proteasome-dependent protein degradation.

The enzyme catalyses S-ubiquitinyl-[E1 ubiquitin-activating enzyme]-L-cysteine + [E2 ubiquitin-conjugating enzyme]-L-cysteine = [E1 ubiquitin-activating enzyme]-L-cysteine + S-ubiquitinyl-[E2 ubiquitin-conjugating enzyme]-L-cysteine.. Its pathway is protein modification; protein ubiquitination. Catalyzes the covalent attachment of ubiquitin to other proteins. Functions in degradation of misfolded or regulated proteins localized in the endoplasmic reticulum (ER) lumen or membrane via the ubiquitin-proteasome system. Cognate E2 conjugating enzyme for the doa10 ubiquitin ligase complex, which is part of the ERAD-C pathway responsible for the rapid degradation of membrane proteins with misfolded cytoplasmic domains, and of the hrd1 ubiquitin ligase complex, which is part of the ERAD-L and ERAD-M pathways responsible for the rapid degradation of soluble lumenal and membrane proteins with misfolded lumenal domains (ERAD-L), or ER-membrane proteins with misfolded transmembrane domains (ERAD-M). Together with hrd1, required for the degradation of the transcription factor sre1 precursor in the absence of its binding partner scp1. Has a role in the formation of chromatin structures that influence the localization of transcriptional silencing factors. The protein is Ubiquitin-conjugating enzyme E2-18 kDa (ubc7) of Schizosaccharomyces pombe (strain 972 / ATCC 24843) (Fission yeast).